Here is a 376-residue protein sequence, read N- to C-terminus: Probable ATP-dependent RNA helicase YfmL (376 aa).

In terms of domain architecture, Helicase ATP-binding spans 35 to 205; sequence AQLIMDGKDV…RELAQEPEVL (171 aa). An ATP-binding site is contributed by 48–55; the sequence is SPTGTGKT. Positions 153–156 match the DEAD box motif; that stretch reads DETD. The region spanning 231 to 374 is the Helicase C-terminal domain; that stretch reads KLLQKLSRLE…EAVYAGGKLK (144 aa).

The protein belongs to the DEAD box helicase family.

The enzyme catalyses ATP + H2O = ADP + phosphate + H(+). Its function is as follows. A probable DEAD-box RNA helicase that plays a role in ribosomal 50S subunit assembly. May be a non-specific RNA helicase. This chain is Probable ATP-dependent RNA helicase YfmL (yfmL), found in Bacillus subtilis (strain 168).